Reading from the N-terminus, the 501-residue chain is Probable malate:quinone oxidoreductase (501 aa).

This sequence belongs to the MQO family. The cofactor is FAD.

The catalysed reaction is (S)-malate + a quinone = a quinol + oxaloacetate. It participates in carbohydrate metabolism; tricarboxylic acid cycle; oxaloacetate from (S)-malate (quinone route): step 1/1. This is Probable malate:quinone oxidoreductase from Geobacillus kaustophilus (strain HTA426).